The chain runs to 344 residues: MITERQNEILNLIIDLFTQTHEPVGSKALQASIETSSATIRNEMAKLEKLGLLEKAHTSSGRMPSPAGFKYFVEHSLSLDSVDESDIYQLVKAFDFEAFRLEDILAKASQVLADMTHYSVAILDVEPSHQKLTAFDIVQLSNHDALAVLNLDESKPQTVQFAIPKNFLTRDLVKIKEIVDERLLGRNLMDVHYKLRTEIPQILQKYFTVTDNVLDLFEYIFRELFQESIFVSGKVNALEYAGLDTYQFLNNEQHLAFTIRQGMSENEMATVQVADSNEPALANLSLLTYKFLIPYRGFGLLSLIGPIDMNYRRNVSLINVMGRILAIKLRDYYRYLNSNHYEVN.

The protein belongs to the HrcA family.

In terms of biological role, negative regulator of class I heat shock genes (grpE-dnaK-dnaJ and groELS operons). Prevents heat-shock induction of these operons. The chain is Heat-inducible transcription repressor HrcA from Streptococcus uberis (strain ATCC BAA-854 / 0140J).